A 404-amino-acid chain; its full sequence is Latent membrane protein 1 (404 aa).

Over 1–23 (MERDLESAPPSAPRPPLGPPLSS) the chain is Cytoplasmic. The chain crosses the membrane as a helical span at residues 24–44 (SIGLALLLLLLALLFWLYIVM). Topologically, residues 45 to 51 (SDWTGGA) are extracellular. Residues 52-72 (LLVLYSFALMLIIIILIIFIF) traverse the membrane as a helical segment. At 73-75 (RRD) the chain is on the cytoplasmic side. Residues 76-96 (LLCPLGGLGLLLLMITLLLIA) form a helical membrane-spanning segment. Over 97–106 (LWNLHGQALY) the chain is Extracellular. Residues 107–127 (LGIVLFIFGCLLVFGIWIYFL) form a helical membrane-spanning segment. Over 128 to 139 (EILWRLGATLWQ) the chain is Cytoplasmic. The helical transmembrane segment at 140–160 (LLAFILAFFLAIILLIIALYL) threads the bilayer. Residues 161–163 (QQN) lie on the Extracellular side of the membrane. A helical transmembrane segment spans residues 164-184 (WWTLLVDLLWLLLFMAILIWM). Topologically, residues 185 to 404 (YYHGPRHTDE…HGPVQLSYYD (220 aa)) are cytoplasmic. Residues 194-232 (EHHHDDSLPHPQQATDDSSHESDSNSNEGRHHLLVSGAG) form a CTAR1 region. A disordered region spans residues 194 to 404 (EHHHDDSLPH…HGPVQLSYYD (211 aa)). Residues 204 to 208 (PQQAT) carry the Interaction with host TRAF proteins motif. Residues 210-224 (DSSHESDSNSNEGRH) are compositionally biased toward basic and acidic residues. 2 stretches are compositionally biased toward low complexity: residues 251–322 (NGPQ…PQDP) and 375–384 (PHLPTLLLGT). Residues 370–404 (GGGGDPHLPTLLLGTSGSGGDDDDPHGPVQLSYYD) form a CTAR2 region.

Belongs to the herpesviridae LMP-1 family. As to quaternary structure, interacts (via PXQXT motif) with host tumor necrosis factor receptor-associated factor (TRAF) proteins TRAF1, TRAF2, TRAF3 and TRAF5. Interacts with human protein ZMYND11; leading to negatively regulate NF-kappa-B activation. Interacts with host UBE2I; this interaction induces the sumoylation of various cellular proteins. Interacts with host IRF7. Interacts with host TYK2. Ubiquitinated on the N-terminus.

Its subcellular location is the host cell membrane. In terms of biological role, acts as a CD40 functional homolog to prevent apoptosis of infected B-lymphocytes and drive their proliferation. Functions as a constitutively active tumor necrosis factor receptor that induces the activation of several signaling pathways, including those of the NF-kappa-B family. LMP1 signaling leads to up-regulation of antiapoptotic proteins and provide growth signals in latently infected cells. Interacts with host UBE2I and subsequently affects the sumoylation state of several cellular proteins. For example, induces the sumoylation of host IRF7 thereby limiting its transcriptional activity and modulating the activation of innate immune responses. Also inhibits host IFN-alpha-stimulated STAT2 nuclear translocation and interferon-stimulated response element transcriptional activity by interacting with and inhibiting host TYK2. Induces SUMO expression during viral latency thereby dysregulating the host sumoylation processes. The chain is Latent membrane protein 1 (LMP1) from Homo sapiens (Human).